The following is a 309-amino-acid chain: Porphobilinogen deaminase (309 aa).

Cys244 carries the S-(dipyrrolylmethanemethyl)cysteine modification.

The protein belongs to the HMBS family. Monomer. Dipyrromethane is required as a cofactor.

The enzyme catalyses 4 porphobilinogen + H2O = hydroxymethylbilane + 4 NH4(+). The protein operates within porphyrin-containing compound metabolism; protoporphyrin-IX biosynthesis; coproporphyrinogen-III from 5-aminolevulinate: step 2/4. Functionally, tetrapolymerization of the monopyrrole PBG into the hydroxymethylbilane pre-uroporphyrinogen in several discrete steps. This is Porphobilinogen deaminase from Agrobacterium fabrum (strain C58 / ATCC 33970) (Agrobacterium tumefaciens (strain C58)).